We begin with the raw amino-acid sequence, 673 residues long: Pesticin receptor (673 aa).

An N-terminal signal peptide occupies residues 1 to 22 (MKMTRLYPLALGGLLLPAIANA). A TonB box motif is present at residues 30–37 (STLVVTAS). Residues 41-155 (SRSASANNVS…QGGIINIVTQ (115 aa)) form the TBDR plug domain. Residues 160-672 (TPRGYIEGGV…TVGINTRIDF (513 aa)) form the TBDR beta-barrel domain. The TonB C-terminal box signature appears at 657 to 673 (QVNMGRTVGINTRIDFF).

This sequence belongs to the TonB-dependent receptor family.

The protein resides in the cell outer membrane. In terms of biological role, receptor for the bacteriocin pesticin and for the siderophore yersiniabactin. This Yersinia pestis protein is Pesticin receptor (fyuA).